An 83-amino-acid polypeptide reads, in one-letter code: Cytochrome c oxidase subunit 7A2, mitochondrial (83 aa).

The N-terminal 23 residues, 1 to 23 (MLRNLLALRQIGQRTISTASRRH), are a transit peptide targeting the mitochondrion. Over 24-48 (FKNKVPEKQKLFQEDDEIPLYLKGG) the chain is Mitochondrial matrix. K33 is modified (N6-acetyllysine). The helical transmembrane segment at 49–77 (VADALLYRATMILTVGGTAYAIYELAVAS) threads the bilayer. The Mitochondrial intermembrane segment spans residues 78-83 (FPKKQE).

The protein belongs to the cytochrome c oxidase VIIa family. As to quaternary structure, component of the cytochrome c oxidase (complex IV, CIV), a multisubunit enzyme composed of 14 subunits. The complex is composed of a catalytic core of 3 subunits MT-CO1, MT-CO2 and MT-CO3, encoded in the mitochondrial DNA, and 11 supernumerary subunits COX4I1 (or COX4I2), COX5A, COX5B, COX6A1 (or COX6A2), COX6B1 (or COX6B2), COX6C, COX7A2 (or COX7A1), COX7B, COX7C, COX8A and NDUFA4, which are encoded in the nuclear genome. The complex exists as a monomer or a dimer and forms supercomplexes (SCs) in the inner mitochondrial membrane with NADH-ubiquinone oxidoreductase (complex I, CI) and ubiquinol-cytochrome c oxidoreductase (cytochrome b-c1 complex, complex III, CIII), resulting in different assemblies (supercomplex SCI(1)III(2)IV(1) and megacomplex MCI(2)III(2)IV(2)). Interacts with PET100.

It is found in the mitochondrion inner membrane. The protein operates within energy metabolism; oxidative phosphorylation. In terms of biological role, component of the cytochrome c oxidase, the last enzyme in the mitochondrial electron transport chain which drives oxidative phosphorylation. The respiratory chain contains 3 multisubunit complexes succinate dehydrogenase (complex II, CII), ubiquinol-cytochrome c oxidoreductase (cytochrome b-c1 complex, complex III, CIII) and cytochrome c oxidase (complex IV, CIV), that cooperate to transfer electrons derived from NADH and succinate to molecular oxygen, creating an electrochemical gradient over the inner membrane that drives transmembrane transport and the ATP synthase. Cytochrome c oxidase is the component of the respiratory chain that catalyzes the reduction of oxygen to water. Electrons originating from reduced cytochrome c in the intermembrane space (IMS) are transferred via the dinuclear copper A center (CU(A)) of subunit 2 and heme A of subunit 1 to the active site in subunit 1, a binuclear center (BNC) formed by heme A3 and copper B (CU(B)). The BNC reduces molecular oxygen to 2 water molecules using 4 electrons from cytochrome c in the IMS and 4 protons from the mitochondrial matrix. The polypeptide is Cytochrome c oxidase subunit 7A2, mitochondrial (COX7A2) (Homo sapiens (Human)).